Consider the following 161-residue polypeptide: Large ribosomal subunit protein uL30m (161 aa).

The N-terminal 34 residues, 1–34 (MAGILRSIVQRPPGRLQTATKGVEPLVCVDWIRH), are a transit peptide targeting the mitochondrion.

Belongs to the universal ribosomal protein uL30 family. As to quaternary structure, component of the mitochondrial ribosome large subunit (39S) which comprises a 16S rRNA and about 50 distinct proteins.

The protein resides in the mitochondrion. The sequence is that of Large ribosomal subunit protein uL30m (MRPL30) from Bos taurus (Bovine).